A 230-amino-acid chain; its full sequence is 3-beta-hydroxysteroid-Delta(8),Delta(7)-isomerase (230 aa).

An N-acetylthreonine modification is found at threonine 2. A run of 4 helical transmembrane segments spans residues tryptophan 29–leucine 49, leucine 66–tyrosine 86, methionine 121–leucine 141, and phenylalanine 185–leucine 205. The 144-residue stretch at tryptophan 61 to valine 204 folds into the EXPERA domain.

Belongs to the EBP family.

The protein localises to the endoplasmic reticulum membrane. It is found in the nucleus envelope. Its subcellular location is the cytoplasmic vesicle. It carries out the reaction lathosterol = 5alpha-cholest-8-en-3beta-ol. It catalyses the reaction zymosterol = 5alpha-cholesta-7,24-dien-3beta-ol. The catalysed reaction is 5,6alpha-epoxy-5alpha-cholestan-3beta-ol + H2O = 5alpha-cholestane-3beta,5,6beta-triol. The enzyme catalyses 5,6beta-epoxy-5beta-cholestan-3beta-ol + H2O = 5alpha-cholestane-3beta,5,6beta-triol. Its pathway is steroid biosynthesis; cholesterol biosynthesis. With respect to regulation, cholestenol Delta-isomerase and cholesterol-5,6-epoxide hydrolase (ChEH) activities are inhibited by tamoxifen and the selective AEBS ligand (4-benzyl-phenoxy)-ethyl-N-pyrrolidine (PBPE). ChEH activity is inhibited by oleic acid. Isomerase that catalyzes the conversion of Delta(8)-sterols to their corresponding Delta(7)-isomers a catalytic step in the postlanosterol biosynthesis of cholesterol. In terms of biological role, component of the microsomal antiestrogen binding site (AEBS), a multiproteic complex at the ER membrane that consists of an association between EBP and 7-dehydrocholesterol reductase/DHCR7. This complex is responsible for cholesterol-5,6-epoxide hydrolase (ChEH) activity, which consists in the hydration of cholesterol-5,6-epoxides (5,6-EC) into cholestane-3beta,5alpha,6beta-triol (CT). The precise role of each component of this complex has not been described yet. The polypeptide is 3-beta-hydroxysteroid-Delta(8),Delta(7)-isomerase (Homo sapiens (Human)).